Reading from the N-terminus, the 522-residue chain is Chromosomal replication initiator protein DnaA (522 aa).

A domain I, interacts with DnaA modulators region spans residues 1–71 (MQDFWHAASA…QSLACDYWEM (71 aa)). The tract at residues 71 to 185 (MQVDVQFVLD…PVDDTVHERS (115 aa)) is domain II. The interval 186-402 (RLNPILTFDN…GALRKILAYS (217 aa)) is domain III, AAA+ region. ATP is bound by residues Gly230, Gly232, Lys233, and Thr234. A domain IV, binds dsDNA region spans residues 403–522 (NFHGKEITIE…LHVLEQTLKG (120 aa)).

It belongs to the DnaA family. Oligomerizes as a right-handed, spiral filament on DNA at oriC.

The protein resides in the cytoplasm. Plays an essential role in the initiation and regulation of chromosomal replication. ATP-DnaA binds to the origin of replication (oriC) to initiate formation of the DNA replication initiation complex once per cell cycle. Binds the DnaA box (a 9 base pair repeat at the origin) and separates the double-stranded (ds)DNA. Forms a right-handed helical filament on oriC DNA; dsDNA binds to the exterior of the filament while single-stranded (ss)DNA is stabiized in the filament's interior. The ATP-DnaA-oriC complex binds and stabilizes one strand of the AT-rich DNA unwinding element (DUE), permitting loading of DNA polymerase. After initiation quickly degrades to an ADP-DnaA complex that is not apt for DNA replication. Binds acidic phospholipids. The protein is Chromosomal replication initiator protein DnaA of Ralstonia nicotianae (strain ATCC BAA-1114 / GMI1000) (Ralstonia solanacearum).